Reading from the N-terminus, the 473-residue chain is Cysteine--tRNA ligase (473 aa).

C28 is a binding site for Zn(2+). The short motif at 30–40 is the 'HIGH' region element; the sequence is VTVYDLCHLGH. The Zn(2+) site is built by C213, H238, and E242. The short motif at 270–274 is the 'KMSKS' region element; that stretch reads KMSKS. K273 serves as a coordination point for ATP.

This sequence belongs to the class-I aminoacyl-tRNA synthetase family. Monomer. Zn(2+) is required as a cofactor.

The protein resides in the cytoplasm. It catalyses the reaction tRNA(Cys) + L-cysteine + ATP = L-cysteinyl-tRNA(Cys) + AMP + diphosphate. This chain is Cysteine--tRNA ligase, found in Blochmanniella pennsylvanica (strain BPEN).